A 642-amino-acid polypeptide reads, in one-letter code: tRNA uridine 5-carboxymethylaminomethyl modification enzyme MnmG (642 aa).

Residue 24–29 (GGGHAG) participates in FAD binding. 284 to 298 (GPRYCPSIEDKIHRF) contributes to the NAD(+) binding site.

The protein belongs to the MnmG family. In terms of assembly, homodimer. Heterotetramer of two MnmE and two MnmG subunits. FAD serves as cofactor.

It is found in the cytoplasm. Functionally, NAD-binding protein involved in the addition of a carboxymethylaminomethyl (cmnm) group at the wobble position (U34) of certain tRNAs, forming tRNA-cmnm(5)s(2)U34. The sequence is that of tRNA uridine 5-carboxymethylaminomethyl modification enzyme MnmG from Psychrobacter sp. (strain PRwf-1).